Consider the following 511-residue polypeptide: MEEFKVYFEKDGSRQQYFLYPLLFQEYIYALAHNHVLNGLIFYESSENFVYDNKFSLIIVKRLITQMYQQNSLSNLVNDSNRNRLVRQNKNFYYQTILEGFSVIMEIPFSIIFLSSVEEKKAKIPKIQNLRSIHATFPFLEDKLSHLNHVSDILIPYPIHLEILVQVLQGWIQDVPSLHLLRFFLHEFHNWNSLITPKKSISFLFSKGNQRLFLFLYNSYVFECESALVFLRKQSFYLRSTSFGTFVERTHFYGKIEHIVVVRRKNFQKALSLFKDPFIHYIRYKGKSILASKGTHFLMKKWKYHLLNFWQCHFDFWSQPHRIHINQLSNHSFYFMGYLSSVRINFSTVRSQMLESSFLMDTPTKKFDTIVPIIPLIGSLAKAKFCNVSGHPVSKPVWADLSDADIIDRFGRICRNLSHYHSGSSKKQSLYRVKYILRLSCARTLARKHKSTVRAFFKRLGSEFLEEFFTDKEQVLSLIFPSLRSPSHRVHKGERIWYLDIIRINDLVNNS.

Belongs to the intron maturase 2 family. MatK subfamily.

The protein resides in the plastid. It is found in the chloroplast. In terms of biological role, usually encoded in the trnK tRNA gene intron. Probably assists in splicing its own and other chloroplast group II introns. This chain is Maturase K, found in Acorus calamus var. americanus (American sweet flag).